A 322-amino-acid chain; its full sequence is Transmembrane protein 171 (322 aa).

The next 4 helical transmembrane spans lie at 22-42 (IFFLFVFGAALLCVGVLLSIF), 57-77 (IVLKIAGPSCAVVGLGAVILA), 112-132 (LIFGFLFLTSGMLISILGIWV), and 159-179 (FLSLQIMGPLVVLVGLCFFVV). The interval 223–322 (PPPYFPESSA…LGAPSDASPP (100 aa)) is disordered. Over residues 228–241 (PESSAAAPSPGANS) the composition is skewed to low complexity. Composition is skewed to polar residues over residues 242-267 (LHQIENPPSYSSLFNYGTPTPENQGA) and 279-289 (ISGQGSSSERS).

It is found in the membrane. The sequence is that of Transmembrane protein 171 (Tmem171) from Mus musculus (Mouse).